A 311-amino-acid polypeptide reads, in one-letter code: Olfactory receptor 5M8 (311 aa).

Topologically, residues 1–24 (MRRNCTLVTEFILLGLTSRRELQI) are extracellular. Asparagine 4 carries N-linked (GlcNAc...) asparagine glycosylation. Residues 25 to 45 (LLFTLFLAIYMVTVAGNLGMI) form a helical membrane-spanning segment. Topologically, residues 46–53 (VLIQANAW) are cytoplasmic. A helical transmembrane segment spans residues 54-74 (LHMPMYFFLSHLSFVDLCFSS). Over 75 to 98 (NVTPKMLEIFLSEKKSISYPACLV) the chain is Extracellular. A disulfide bond links cysteine 96 and cysteine 188. Residues 99-119 (QCYLFIALVHVEIYILAVMAF) form a helical membrane-spanning segment. At 120 to 138 (DRYMAICNPLLYGSRMSKS) the chain is on the cytoplasmic side. A helical transmembrane segment spans residues 139 to 159 (VCSFLITVPYVYGALTGLMET). Topologically, residues 160-195 (MWTYNLAFCGPNEINHFYCADPPLIKLACSDTYNKE) are extracellular. The chain crosses the membrane as a helical span at residues 196–216 (LSMFIVAGWNLSFSLFIICIS). The Cytoplasmic segment spans residues 217–236 (YLYIFPAILKIRSTEGRQKA). A helical membrane pass occupies residues 237-257 (FSTCGSHLTAVTIFYATLFFM). The Extracellular segment spans residues 258–270 (YLRPPSKESVEQG). Residues 271–291 (KMVAVFYTTVIPMLNLIIYSL) traverse the membrane as a helical segment. At 292-311 (RNKNVKEALIKELSMKIYFS) the chain is on the cytoplasmic side.

It belongs to the G-protein coupled receptor 1 family.

It localises to the cell membrane. Its function is as follows. Odorant receptor. This chain is Olfactory receptor 5M8 (OR5M8), found in Homo sapiens (Human).